Here is a 106-residue protein sequence, read N- to C-terminus: ATP-dependent Clp protease adapter protein ClpS (106 aa).

It belongs to the ClpS family. As to quaternary structure, binds to the N-terminal domain of the chaperone ClpA.

Its function is as follows. Involved in the modulation of the specificity of the ClpAP-mediated ATP-dependent protein degradation. This chain is ATP-dependent Clp protease adapter protein ClpS, found in Escherichia coli O139:H28 (strain E24377A / ETEC).